A 205-amino-acid polypeptide reads, in one-letter code: Carboxysome shell protein CsoS1D (205 aa).

2 consecutive BMC circularly permuted domains span residues 3–100 (ELRT…TREY) and 106–205 (VVMW…TCRS). The short motif at 68 to 69 (ER) is the Gates the pore element.

The protein belongs to the EutL/PduB family. In terms of assembly, homotrimer. Forms a dimer of stacked trimers, the same faces interact. Probably forms a CsoS1-CsoS1D-CsoS2 complex.

The protein resides in the carboxysome. In terms of biological role, part of the carboxysome shell, a polyhedral inclusion where RuBisCO (ribulose bisphosphate carboxylase, cbbL-cbbS) is sequestered. It may control transport of RuBisCO reactants in and out of the carboxysome. This Hydrogenovibrio crunogenus (strain DSM 25203 / XCL-2) (Thiomicrospira crunogena) protein is Carboxysome shell protein CsoS1D.